The chain runs to 225 residues: Large ribosomal subunit protein mL58 (225 aa).

The segment at 106–138 is disordered; it reads PQAPITTPESSSTDAAAADQHGDLPPVLYNPTK. Residues 109-119 are compositionally biased toward polar residues; the sequence is PITTPESSSTD.

The protein belongs to the mitochondrion-specific ribosomal protein mL58 family. In terms of assembly, component of the mitochondrial large ribosomal subunit (mt-LSU). Mature N.crassa 74S mitochondrial ribosomes consist of a small (37S) and a large (54S) subunit. The 37S small subunit contains a 16S ribosomal RNA (16S mt-rRNA) and 32 different proteins. The 54S large subunit contains a 23S rRNA (23S mt-rRNA) and 42 different proteins.

The protein localises to the mitochondrion. Functionally, component of the mitochondrial ribosome (mitoribosome), a dedicated translation machinery responsible for the synthesis of mitochondrial genome-encoded proteins, including at least some of the essential transmembrane subunits of the mitochondrial respiratory chain. The mitoribosomes are attached to the mitochondrial inner membrane and translation products are cotranslationally integrated into the membrane. The sequence is that of Large ribosomal subunit protein mL58 (mrpl20) from Neurospora crassa (strain ATCC 24698 / 74-OR23-1A / CBS 708.71 / DSM 1257 / FGSC 987).